Here is a 360-residue protein sequence, read N- to C-terminus: MLTLSDFDFDLPPELIAQTALPERSASRLLEVDNTNPSAPPRLIDRRFAELPACVAPGDLLVFNDTKVLKARFFGRKASGGKIEVLIERVTGERTALAQIRASKSPPPGTTLTLADAFDVTVGERVEPFFTLHFPDNCLVLIERHGRLPLPPYIEHAPDAADETRYQTVFAANPGAVAAPTAGLHFDDAVLAALEARGVERATLTLHVGAGTFQPVRVENLAEHRMHSESYELTDALVEKIAATRARGGRVIAVGTTSMRALEAAARDAQAAGRPLAATRAETDIFITPGYRFRVVDRLVTNFHLPKSTLLMLVSAFAGIETIRAAYRHAIDARYRFFSYGDAMLLTRRDDAAEATHGGA.

It belongs to the QueA family. Monomer.

Its subcellular location is the cytoplasm. It carries out the reaction 7-aminomethyl-7-carbaguanosine(34) in tRNA + S-adenosyl-L-methionine = epoxyqueuosine(34) in tRNA + adenine + L-methionine + 2 H(+). The protein operates within tRNA modification; tRNA-queuosine biosynthesis. Transfers and isomerizes the ribose moiety from AdoMet to the 7-aminomethyl group of 7-deazaguanine (preQ1-tRNA) to give epoxyqueuosine (oQ-tRNA). The polypeptide is S-adenosylmethionine:tRNA ribosyltransferase-isomerase (Burkholderia mallei (strain NCTC 10247)).